A 351-amino-acid polypeptide reads, in one-letter code: Transaldolase (351 aa).

Lysine 138 (schiff-base intermediate with substrate) is an active-site residue.

This sequence belongs to the transaldolase family. Type 2 subfamily.

Its subcellular location is the cytoplasm. The catalysed reaction is D-sedoheptulose 7-phosphate + D-glyceraldehyde 3-phosphate = D-erythrose 4-phosphate + beta-D-fructose 6-phosphate. Its pathway is carbohydrate degradation; pentose phosphate pathway; D-glyceraldehyde 3-phosphate and beta-D-fructose 6-phosphate from D-ribose 5-phosphate and D-xylulose 5-phosphate (non-oxidative stage): step 2/3. Transaldolase is important for the balance of metabolites in the pentose-phosphate pathway. The chain is Transaldolase (tal) from Neisseria meningitidis serogroup A / serotype 4A (strain DSM 15465 / Z2491).